Here is a 101-residue protein sequence, read N- to C-terminus: Replication restart protein PriB (101 aa).

Positions Met1–Thr101 constitute an SSB domain.

It belongs to the PriB family. Homodimer. Interacts with PriA and DnaT. Component of the replication restart primosome. Primosome assembly occurs via a 'hand-off' mechanism. PriA binds to replication forks, subsequently PriB then DnaT bind; DnaT then displaces ssDNA to generate the helicase loading substrate.

Its function is as follows. Involved in the restart of stalled replication forks, which reloads the replicative helicase on sites other than the origin of replication; the PriA-PriB pathway is the major replication restart pathway. During primosome assembly it facilitates complex formation between PriA and DnaT on DNA; stabilizes PriA on DNA. Stimulates the DNA unwinding activity of PriA helicase. This is Replication restart protein PriB from Shewanella pealeana (strain ATCC 700345 / ANG-SQ1).